The chain runs to 506 residues: GTPase Der (506 aa).

EngA-type G domains follow at residues 3–166 and 218–391; these read PVVA…GEQL and IKIA…ACAT. Residues 9–16, 56–60, 118–121, 224–231, 271–275, and 336–339 contribute to the GTP site; these read GRPNVGKS, DTGGI, NKTD, DTAGV, and NKWD. One can recognise a KH-like domain in the interval 392–476; it reads QKTSTSMLTR…PIRIQFQEGN (85 aa).

It belongs to the TRAFAC class TrmE-Era-EngA-EngB-Septin-like GTPase superfamily. EngA (Der) GTPase family. In terms of assembly, associates with the 50S ribosomal subunit.

GTPase that plays an essential role in the late steps of ribosome biogenesis. In Actinobacillus pleuropneumoniae serotype 5b (strain L20), this protein is GTPase Der.